We begin with the raw amino-acid sequence, 246 residues long: Protein lin-37 homolog (246 aa).

Methionine 1 carries the post-translational modification N-acetylmethionine. Glycyl lysine isopeptide (Lys-Gly) (interchain with G-Cter in SUMO2) cross-links involve residues lysine 5 and lysine 7. A compositionally biased stretch (basic and acidic residues) spans 39–55 (RLDEEAGKTPLDTHNKD). Disordered regions lie at residues 39–90 (RLDE…GGPQ) and 129–208 (VRER…TLIY). Phosphoserine is present on residues serine 135 and serine 138. A Phosphothreonine modification is found at threonine 167. A phosphoserine mark is found at serine 182 and serine 202.

In terms of assembly, component of the DREAM complex (also named LINC complex) at least composed of E2F4, E2F5, LIN9, LIN37, LIN52, LIN54, MYBL1, MYBL2, RBL1, RBL2, RBBP4, TFDP1 and TFDP2. The complex exists in quiescent cells where it represses cell cycle-dependent genes. It dissociates in S phase when LIN9, LIN37, LIN52 and LIN54 form a subcomplex that binds to MYBL2.

The protein is Protein lin-37 homolog (Lin37) of Mus musculus (Mouse).